Here is a 298-residue protein sequence, read N- to C-terminus: Homoserine kinase (298 aa).

An ATP-binding site is contributed by 85–95 (PMGGLGSSAAS).

It belongs to the GHMP kinase family. Homoserine kinase subfamily.

It localises to the cytoplasm. The enzyme catalyses L-homoserine + ATP = O-phospho-L-homoserine + ADP + H(+). Its pathway is amino-acid biosynthesis; L-threonine biosynthesis; L-threonine from L-aspartate: step 4/5. In terms of biological role, catalyzes the ATP-dependent phosphorylation of L-homoserine to L-homoserine phosphate. The chain is Homoserine kinase from Methanopyrus kandleri (strain AV19 / DSM 6324 / JCM 9639 / NBRC 100938).